A 1157-amino-acid polypeptide reads, in one-letter code: ATP-dependent helicase/deoxyribonuclease subunit B (1157 aa).

The UvrD-like helicase ATP-binding domain occupies 1–275 (MTLHAYLGRA…QYFNQLYRFN (275 aa)). Residue 8 to 15 (GRAGTGKS) coordinates ATP. The UvrD-like helicase C-terminal domain maps to 269-583 (NQLYRFNNQD…SIGTMDLAKV (315 aa)). Residues C784, C1112, C1115, and C1121 each coordinate [4Fe-4S] cluster.

The protein belongs to the helicase family. AddB/RexB type 1 subfamily. As to quaternary structure, heterodimer of AddA and AddB. Requires Mg(2+) as cofactor. It depends on [4Fe-4S] cluster as a cofactor.

Its function is as follows. The heterodimer acts as both an ATP-dependent DNA helicase and an ATP-dependent, dual-direction single-stranded exonuclease. Recognizes the chi site generating a DNA molecule suitable for the initiation of homologous recombination. The AddB subunit has 5' -&gt; 3' nuclease activity but not helicase activity. The protein is ATP-dependent helicase/deoxyribonuclease subunit B of Staphylococcus aureus (strain JH9).